The following is a 115-amino-acid chain: Thionin-like protein 2 (115 aa).

A signal peptide spans methionine 1–alanine 20.

This sequence belongs to the plant thionin (TC 1.C.44) family. Is disulfide-linked.

The protein resides in the secreted. May be involved in plant defense. The polypeptide is Thionin-like protein 2 (Arabidopsis thaliana (Mouse-ear cress)).